Here is a 311-residue protein sequence, read N- to C-terminus: Ribosomal RNA small subunit methyltransferase H (311 aa).

Residues Gly-33 to His-35, Asp-53, Phe-77, Asp-98, and Gln-105 each bind S-adenosyl-L-methionine.

It belongs to the methyltransferase superfamily. RsmH family.

The protein resides in the cytoplasm. It catalyses the reaction cytidine(1402) in 16S rRNA + S-adenosyl-L-methionine = N(4)-methylcytidine(1402) in 16S rRNA + S-adenosyl-L-homocysteine + H(+). In terms of biological role, specifically methylates the N4 position of cytidine in position 1402 (C1402) of 16S rRNA. This Thiobacillus denitrificans (strain ATCC 25259 / T1) protein is Ribosomal RNA small subunit methyltransferase H.